A 681-amino-acid polypeptide reads, in one-letter code: U3 small nucleolar ribonucleoprotein protein MPP10 (681 aa).

3 positions are modified to phosphoserine: serine 61, serine 120, and serine 139. A compositionally biased stretch (acidic residues) spans 105–147; it reads SLLPESEEQEREEDGSEIEADDKEDLEDLEEEEVSDMGNDDPE. Disordered regions lie at residues 105–202 and 216–364; these read SLLP…IVDD and NIEK…EKRQ. Residues 109–138 adopt a coiled-coil conformation; that stretch reads ESEEQEREEDGSEIEADDKEDLEDLEEEEV. Positions 148–162 are enriched in basic and acidic residues; it reads MGERAENSSKSDLRK. 3 positions are modified to phosphoserine: serine 163, serine 167, and serine 171. The segment covering 180-190 has biased composition (polar residues); it reads LEQQSKVQNKG. 2 stretches are compositionally biased toward basic and acidic residues: residues 193-202 and 216-226; these read KPREKSIVDD and NIEKEEERKDD. Positions 205 to 239 form a coiled coil; the sequence is FKLSEMEAYLENIEKEEERKDDNDEEEEDIDFFED. Positions 227-247 are enriched in acidic residues; it reads NDEEEEDIDFFEDIDSDEDEG. At serine 242 the chain carries Phosphoserine. Residues 253-264 are compositionally biased toward basic residues; that stretch reads KKLKSGKSSRNL. 2 positions are modified to phosphoserine: serine 275 and serine 289. Positions 280-290 are enriched in basic and acidic residues; the sequence is TNVHDDELDSN. Coiled coils occupy residues 284–324 and 348–382; these read DDEL…NKQH and NVKK…LEKK. Acidic residues predominate over residues 291 to 318; the sequence is KEDDEIAEEEAEELSISETDEDDDLQEN. Positions 319–329 are enriched in basic and acidic residues; sequence EDNKQHKESLK. Lysine 350 is covalently cross-linked (Glycyl lysine isopeptide (Lys-Gly) (interchain with G-Cter in SUMO2)). Residues 351 to 364 show a composition bias toward basic and acidic residues; the sequence is KNSDEVKSSFEKRQ. Glycyl lysine isopeptide (Lys-Gly) (interchain with G-Cter in SUMO2) cross-links involve residues lysine 382 and lysine 394. The stretch at 469 to 490 forms a coiled coil; that stretch reads LAEIYEQEYIKLNQQKTAEEEN. Lysine 555 participates in a covalent cross-link: Glycyl lysine isopeptide (Lys-Gly) (interchain with G-Cter in SUMO2). The segment covering 558–575 has biased composition (basic and acidic residues); that stretch reads NKAGDIKTAAEKTATDKK. Residues 558-606 form a disordered region; sequence NKAGDIKTAAEKTATDKKRERRKKKYQKRMKIKEKEKRRKLLEKSSVDQ. Residues 574 to 604 are a coiled coil; the sequence is KKRERRKKKYQKRMKIKEKEKRRKLLEKSSV. The segment covering 576–598 has biased composition (basic residues); it reads RERRKKKYQKRMKIKEKEKRRKL. Lysine 609 carries the post-translational modification N6-acetyllysine. Residues lysine 632 and lysine 649 each participate in a glycyl lysine isopeptide (Lys-Gly) (interchain with G-Cter in SUMO2) cross-link. Residues 648–670 adopt a coiled-coil conformation; sequence SKLQDQVKMQINDAKKTEKKKKK. Residues 660–681 are disordered; the sequence is DAKKTEKKKKKRQDISVHKLKL. Over residues 672–681 the composition is skewed to basic and acidic residues; that stretch reads QDISVHKLKL.

It belongs to the MPP10 family. In terms of assembly, part of the small subunit (SSU) processome, composed of more than 70 proteins and the RNA chaperone small nucleolar RNA (snoRNA) U3. Component of a heterotrimeric complex containing IMP3, IMP4 and MPHOSPH10. Interacts with IMP3 and IMP4. In terms of processing, phosphorylated in M (mitotic) phase.

The protein resides in the nucleus. It localises to the nucleolus. It is found in the chromosome. Component of the 60-80S U3 small nucleolar ribonucleoprotein (U3 snoRNP). Required for the early cleavages during pre-18S ribosomal RNA processing. Part of the small subunit (SSU) processome, first precursor of the small eukaryotic ribosomal subunit. During the assembly of the SSU processome in the nucleolus, many ribosome biogenesis factors, an RNA chaperone and ribosomal proteins associate with the nascent pre-rRNA and work in concert to generate RNA folding, modifications, rearrangements and cleavage as well as targeted degradation of pre-ribosomal RNA by the RNA exosome. In Homo sapiens (Human), this protein is U3 small nucleolar ribonucleoprotein protein MPP10.